The chain runs to 301 residues: 4-hydroxy-tetrahydrodipicolinate synthase (301 aa).

Thr55 provides a ligand contact to pyruvate. The Proton donor/acceptor role is filled by Tyr143. Lys171 serves as the catalytic Schiff-base intermediate with substrate. Ile213 contributes to the pyruvate binding site.

Belongs to the DapA family. As to quaternary structure, homotetramer; dimer of dimers.

It is found in the cytoplasm. The enzyme catalyses L-aspartate 4-semialdehyde + pyruvate = (2S,4S)-4-hydroxy-2,3,4,5-tetrahydrodipicolinate + H2O + H(+). It functions in the pathway amino-acid biosynthesis; L-lysine biosynthesis via DAP pathway; (S)-tetrahydrodipicolinate from L-aspartate: step 3/4. Functionally, catalyzes the condensation of (S)-aspartate-beta-semialdehyde [(S)-ASA] and pyruvate to 4-hydroxy-tetrahydrodipicolinate (HTPA). The protein is 4-hydroxy-tetrahydrodipicolinate synthase of Psychrobacter arcticus (strain DSM 17307 / VKM B-2377 / 273-4).